The primary structure comprises 194 residues: ECF RNA polymerase sigma factor SigX (194 aa).

Residues 32 to 45 (DLLQEVYIRVLNSY) carry the Polymerase core binding motif. The segment at residues 136–155 (IQETAKALRFSESKVKTTQH) is a DNA-binding region (H-T-H motif).

This sequence belongs to the sigma-70 factor family. ECF subfamily. In terms of assembly, interacts transiently with the RNAP core.

It localises to the cell membrane. In terms of biological role, sigma factors are initiation factors that promote the attachment of RNA polymerase (RNAP) to specific initiation sites and are then released. May be involved in the regulation of iron metabolism. Associates with RNAP core during early growth phases, association decreases as cells age. The protein is ECF RNA polymerase sigma factor SigX (sigX) of Bacillus subtilis (strain 168).